Here is a 475-residue protein sequence, read N- to C-terminus: ATP synthase subunit beta, chloroplastic (475 aa).

156–163 (GGAGVGKT) contributes to the ATP binding site.

The protein belongs to the ATPase alpha/beta chains family. In terms of assembly, F-type ATPases have 2 components, CF(1) - the catalytic core - and CF(0) - the membrane proton channel. CF(1) has five subunits: alpha(3), beta(3), gamma(1), delta(1), epsilon(1). CF(0) has four main subunits: a(1), b(1), b'(1) and c(9-12).

Its subcellular location is the plastid. The protein localises to the chloroplast thylakoid membrane. It catalyses the reaction ATP + H2O + 4 H(+)(in) = ADP + phosphate + 5 H(+)(out). Produces ATP from ADP in the presence of a proton gradient across the membrane. The catalytic sites are hosted primarily by the beta subunits. The protein is ATP synthase subunit beta, chloroplastic of Trieres chinensis (Marine centric diatom).